We begin with the raw amino-acid sequence, 206 residues long: uncharacterized protein (206 aa).

4 helical membrane passes run Ile-9–Thr-29, Leu-47–Leu-67, Phe-74–Ile-94, and Ile-150–Phe-170.

It belongs to the Rht family.

Its subcellular location is the cell membrane. This is an uncharacterized protein from Synechocystis sp. (strain ATCC 27184 / PCC 6803 / Kazusa).